The chain runs to 564 residues: Efflux pump DEP3 (564 aa).

The segment covering 1–12 (MVYSSTSSSQNR) has biased composition (polar residues). Positions 1-48 (MVYSSTSSSQNRPDGEKHVEAVGSSTRIPSDELVDRGGGDTTTGKQSP) are disordered. Residues 29-38 (PSDELVDRGG) show a composition bias toward basic and acidic residues. A run of 14 helical transmembrane segments spans residues 65-85 (STTL…PAII), 91-111 (LELL…ILLW), 122-142 (WVYI…GAAP), 152-172 (VIAG…VSVL), 185-205 (STVV…AFAA), 212-232 (WGFY…FLLF), 255-275 (AVIF…GGVV), 281-301 (GTVI…IVLL), 332-352 (FLSS…FQFI), 362-382 (VRLL…GFLM), 386-406 (GLIP…TALM), 423-443 (ILIG…VQSL), 452-472 (AVGA…AISG), and 528-548 (TIWA…FPLL).

Belongs to the major facilitator superfamily. TCR/Tet family.

The protein localises to the cell membrane. Functionally, efflux pump; part of the gene cluster that mediates the biosynthesis of depudecin, a highly oxidized eleven-carbon linear polyketide that acts as a histone deacetylase (HDAC) inhibitor and makes a small contribution to pathogenesis. Is presumed either to be responsible for exporting depudecin, to provide self-protection, or both. In Alternaria brassicicola (Dark leaf spot agent), this protein is Efflux pump DEP3.